A 515-amino-acid polypeptide reads, in one-letter code: ATP synthase subunit alpha (515 aa).

169 to 176 is a binding site for ATP; the sequence is GDRQTGKT.

It belongs to the ATPase alpha/beta chains family. F-type ATPases have 2 components, CF(1) - the catalytic core - and CF(0) - the membrane proton channel. CF(1) has five subunits: alpha(3), beta(3), gamma(1), delta(1), epsilon(1). CF(0) has three main subunits: a(1), b(2) and c(9-12). The alpha and beta chains form an alternating ring which encloses part of the gamma chain. CF(1) is attached to CF(0) by a central stalk formed by the gamma and epsilon chains, while a peripheral stalk is formed by the delta and b chains.

The protein resides in the cell inner membrane. It catalyses the reaction ATP + H2O + 4 H(+)(in) = ADP + phosphate + 5 H(+)(out). Produces ATP from ADP in the presence of a proton gradient across the membrane. The alpha chain is a regulatory subunit. The polypeptide is ATP synthase subunit alpha (Neisseria meningitidis serogroup C / serotype 2a (strain ATCC 700532 / DSM 15464 / FAM18)).